Reading from the N-terminus, the 460-residue chain is MAGGGGGGGGEGPRQLDQTPTWAVSTVCGVIILISIILELIIHKVGEVFERKKKKALFEALEKIKNELMVLGFISLLLTFGQNYIASICVPSRYGHAMSFCGPYDGPSEDDRKKLKKTDHAMRILYSVQRRSLADAPPVNCKKDYVALISLNALHQVHIFIFFLAVFHVIYSAITMMLGRAKIRGWKVWEQEVIHEQEMMNDPSRFRLTHETSFVREHVNSWASNKFFFYVMCFFRQILRSVRKSDYLTMRHGFISVHLAPGMKFDFQKYIKRSLEDDFKVVVGIRPELWAFVMLFLLFDVHGWYVTAVITMIPPLLTLAIGTKLQAIISYMALEIQERHAVIQGMPVVNVSDQHFWFEKPDLVLHMIHFVLFQNAFEITYFFWIWYEFGLRSCFHHHFGLIIIRVCLGVGVQFLCSYITLPLYALVTQMGSTMKRSVFDEQTSKALEQWHKKARKKNEK.

Topologically, residues 1–21 (MAGGGGGGGGEGPRQLDQTPT) are extracellular. Residues 22 to 42 (WAVSTVCGVIILISIILELII) traverse the membrane as a helical segment. The Cytoplasmic segment spans residues 43-67 (HKVGEVFERKKKKALFEALEKIKNE). Residues 68 to 88 (LMVLGFISLLLTFGQNYIASI) form a helical membrane-spanning segment. Residues 89-158 (CVPSRYGHAM…ISLNALHQVH (70 aa)) are Extracellular-facing. Residues 159–179 (IFIFFLAVFHVIYSAITMMLG) traverse the membrane as a helical segment. The Cytoplasmic portion of the chain corresponds to 180–289 (RAKIRGWKVW…KVVVGIRPEL (110 aa)). The helical transmembrane segment at 290–310 (WAFVMLFLLFDVHGWYVTAVI) threads the bilayer. Residues 311–315 (TMIPP) are Extracellular-facing. The helical transmembrane segment at 316 to 336 (LLTLAIGTKLQAIISYMALEI) threads the bilayer. The Cytoplasmic segment spans residues 337-366 (QERHAVIQGMPVVNVSDQHFWFEKPDLVLH). A helical membrane pass occupies residues 367-387 (MIHFVLFQNAFEITYFFWIWY). At 388–398 (EFGLRSCFHHH) the chain is on the extracellular side. Residues 399–419 (FGLIIIRVCLGVGVQFLCSYI) form a helical membrane-spanning segment. At 420–460 (TLPLYALVTQMGSTMKRSVFDEQTSKALEQWHKKARKKNEK) the chain is on the cytoplasmic side. The interval 441–460 (EQTSKALEQWHKKARKKNEK) is calmodulin-binding.

Belongs to the MLO family.

It localises to the membrane. In terms of biological role, may be involved in modulation of pathogen defense and leaf cell death. Activity seems to be regulated by Ca(2+)-dependent calmodulin binding and seems not to require heterotrimeric G proteins. This chain is MLO-like protein 9 (MLO9), found in Arabidopsis thaliana (Mouse-ear cress).